The sequence spans 70 residues: Toxin Boma6d (70 aa).

In terms of domain architecture, LCN-type CS-alpha/beta spans 2-68 (RDAYIAQNYN…VPIKVEGKCH (67 aa)). Cystine bridges form between Cys12–Cys67, Cys16–Cys40, Cys22–Cys50, and Cys26–Cys52.

Belongs to the long (4 C-C) scorpion toxin superfamily. Sodium channel inhibitor family. Alpha subfamily. Expressed by the venom gland.

It is found in the secreted. Functionally, alpha toxins bind voltage-independently at site-3 of sodium channels (Nav) and inhibit the inactivation of the activated channels, thereby blocking neuronal transmission. This chain is Toxin Boma6d, found in Buthus occitanus mardochei (Moroccan scorpion).